Reading from the N-terminus, the 169-residue chain is Ribosome maturation factor RimM (169 aa).

In terms of domain architecture, PRC barrel spans 95–168; that stretch reads EGNYYIFQIV…KMKVELLEGL (74 aa).

It belongs to the RimM family. As to quaternary structure, binds ribosomal protein uS19.

The protein resides in the cytoplasm. Its function is as follows. An accessory protein needed during the final step in the assembly of 30S ribosomal subunit, possibly for assembly of the head region. Essential for efficient processing of 16S rRNA. May be needed both before and after RbfA during the maturation of 16S rRNA. It has affinity for free ribosomal 30S subunits but not for 70S ribosomes. The chain is Ribosome maturation factor RimM from Desulforamulus reducens (strain ATCC BAA-1160 / DSM 100696 / MI-1) (Desulfotomaculum reducens).